We begin with the raw amino-acid sequence, 148 residues long: Large ribosomal subunit protein bL9 (148 aa).

This sequence belongs to the bacterial ribosomal protein bL9 family.

Its function is as follows. Binds to the 23S rRNA. This is Large ribosomal subunit protein bL9 from Listeria innocua serovar 6a (strain ATCC BAA-680 / CLIP 11262).